The sequence spans 355 residues: Serum paraoxonase/arylesterase 1 (355 aa).

Cys-42 and Cys-353 are joined by a disulfide. Ca(2+)-binding residues include Glu-53 and Asp-54. His-115 serves as the catalytic Proton acceptor. The Ca(2+) site is built by Ile-117, Asn-168, Asp-169, and Asn-224. Residue Asn-253 is glycosylated (N-linked (GlcNAc...) asparagine). Ca(2+) is bound by residues Asp-269 and Asn-270. N-linked (GlcNAc...) asparagine glycans are attached at residues Asn-270 and Asn-324.

It belongs to the paraoxonase family. In terms of assembly, homodimer. Interacts with CLU. It depends on Ca(2+) as a cofactor. Glycosylated. In terms of processing, the signal sequence is not cleaved. Plasma. Associated with HDL.

The protein resides in the secreted. It localises to the extracellular space. It catalyses the reaction a phenyl acetate + H2O = a phenol + acetate + H(+). The catalysed reaction is An aryl dialkyl phosphate + H2O = dialkyl phosphate + an aryl alcohol.. It carries out the reaction an N-acyl-L-homoserine lactone + H2O = an N-acyl-L-homoserine + H(+). Hydrolyzes the toxic metabolites of a variety of organophosphorus insecticides. Capable of hydrolyzing a broad spectrum of organophosphate substrates and lactones, and a number of aromatic carboxylic acid esters. Mediates an enzymatic protection of low density lipoproteins against oxidative modification. In Rattus norvegicus (Rat), this protein is Serum paraoxonase/arylesterase 1 (Pon1).